Here is a 322-residue protein sequence, read N- to C-terminus: tRNA pseudouridine synthase B (322 aa).

The segment covering 1–11 has biased composition (basic and acidic residues); sequence MRPPRTTELDR. Residues 1–22 form a disordered region; the sequence is MRPPRTTELDRPMTTAASQRPR. Asp65 (nucleophile) is an active-site residue.

Belongs to the pseudouridine synthase TruB family. Type 1 subfamily.

The catalysed reaction is uridine(55) in tRNA = pseudouridine(55) in tRNA. In terms of biological role, responsible for synthesis of pseudouridine from uracil-55 in the psi GC loop of transfer RNAs. This is tRNA pseudouridine synthase B from Burkholderia lata (strain ATCC 17760 / DSM 23089 / LMG 22485 / NCIMB 9086 / R18194 / 383).